Here is a 105-residue protein sequence, read N- to C-terminus: Large ribosomal subunit protein uL24 (105 aa).

It belongs to the universal ribosomal protein uL24 family. In terms of assembly, part of the 50S ribosomal subunit.

One of two assembly initiator proteins, it binds directly to the 5'-end of the 23S rRNA, where it nucleates assembly of the 50S subunit. Functionally, one of the proteins that surrounds the polypeptide exit tunnel on the outside of the subunit. The polypeptide is Large ribosomal subunit protein uL24 (Mycobacterium avium (strain 104)).